We begin with the raw amino-acid sequence, 108 residues long: Peptidyl-prolyl cis-trans isomerase FKBP1A (108 aa).

A PPIase FKBP-type domain is found at 20-108; sequence GQTVVVHYVG…TFDVELLRLE (89 aa).

It belongs to the FKBP-type PPIase family. FKBP1 subfamily.

It localises to the cytoplasm. It carries out the reaction [protein]-peptidylproline (omega=180) = [protein]-peptidylproline (omega=0). Inhibited by both FK506 and rapamycin. Its function is as follows. Keeps in an inactive conformation TGFBR1, the TGF-beta type I serine/threonine kinase receptor, preventing TGF-beta receptor activation in absence of ligand. May modulate the RYR1 calcium channel activity. PPIases accelerate the folding of proteins. It catalyzes the cis-trans isomerization of proline imidic peptide bonds in oligopeptides. This chain is Peptidyl-prolyl cis-trans isomerase FKBP1A (fkbp1a), found in Xenopus laevis (African clawed frog).